The primary structure comprises 309 residues: tRNA pseudouridine synthase B (309 aa).

D39 (nucleophile) is an active-site residue. The PUA domain maps to 229–306 (LPRVVVHQES…ERVLTLRKVF (78 aa)).

Belongs to the pseudouridine synthase TruB family. Type 1 subfamily.

The enzyme catalyses uridine(55) in tRNA = pseudouridine(55) in tRNA. Its function is as follows. Responsible for synthesis of pseudouridine from uracil-55 in the psi GC loop of transfer RNAs. This chain is tRNA pseudouridine synthase B, found in Thermotoga maritima (strain ATCC 43589 / DSM 3109 / JCM 10099 / NBRC 100826 / MSB8).